The following is a 316-amino-acid chain: GTP cyclohydrolase FolE2 1 (316 aa).

This sequence belongs to the GTP cyclohydrolase IV family.

It carries out the reaction GTP + H2O = 7,8-dihydroneopterin 3'-triphosphate + formate + H(+). It participates in cofactor biosynthesis; 7,8-dihydroneopterin triphosphate biosynthesis; 7,8-dihydroneopterin triphosphate from GTP: step 1/1. In terms of biological role, converts GTP to 7,8-dihydroneopterin triphosphate. In Burkholderia lata (strain ATCC 17760 / DSM 23089 / LMG 22485 / NCIMB 9086 / R18194 / 383), this protein is GTP cyclohydrolase FolE2 1.